The chain runs to 258 residues: Regulatory protein RecX (258 aa).

This sequence belongs to the RecX family.

It localises to the cytoplasm. Modulates RecA activity. This chain is Regulatory protein RecX, found in Streptococcus equi subsp. zooepidemicus (strain MGCS10565).